A 1250-amino-acid polypeptide reads, in one-letter code: Protein SSD1 (1250 aa).

The span at 1-22 shows a compositional bias: polar residues; that stretch reads MSKNSNVNNNRSQEPNNMFVQT. Residues 1-32 form a disordered region; it reads MSKNSNVNNNRSQEPNNMFVQTTGGGKNAPKQ. Ser-2 is modified (N-acetylserine). Ser-40 is subject to Phosphoserine. The disordered stretch occupies residues 79–163; that stretch reads TGQYLSGNSG…SSIYGHSRRH (85 aa). Residues 84-94 show a composition bias toward polar residues; the sequence is SGNSGSNNHFT. Residues 124–145 are compositionally biased toward low complexity; that stretch reads NNSGYYHNSYDNNNNSNNPGSN. Residues Ser-164 and Ser-183 each carry the phosphoserine modification. The segment covering 197–208 has biased composition (polar residues); it reads QADSGSNSTTEQ. Disordered regions lie at residues 197–338, 418–443, and 455–517; these read QADS…GGRK, KEKE…SSDD, and SNNF…DDVE. Thr-227 carries the phosphothreonine modification. The span at 264-276 shows a compositional bias: polar residues; sequence NEYSPGINSNWRN. Low complexity predominate over residues 277–287; the sequence is QSQQPQQQLSP. A phosphoserine mark is found at Ser-286 and Ser-322. Residues 319–329 show a composition bias toward polar residues; it reads SNSSVHSFSSQ. A compositionally biased stretch (polar residues) spans 481–495; sequence STINNDSDSLSSPTK. 2 positions are modified to phosphoserine: Ser-491 and Ser-492. Basic residues predominate over residues 497–510; that stretch reads GVRRRSSLKQRPTQ. Residues 582–657 form the CSD2 domain; the sequence is AWFKPTDKKV…EIDSILRDNN (76 aa). The residue at position 688 (Tyr-688) is a Phosphotyrosine. Positions 694–1015 constitute an RNB domain; that stretch reads DTNEYNIFAI…VHRQLKAVIH (322 aa). Positions 1064–1148 constitute a DIS3L2 C-terminal domain; sequence GQLLTMATVL…SIKNKFRSTA (85 aa).

It belongs to the RNR ribonuclease family.

In terms of biological role, can suppress the lethality due to deletion of SIT4, and partially the defects due to BCY1 disruption. Is implicated in the control of the cell cycle G1 phase. The protein is Protein SSD1 (SSD1) of Saccharomyces cerevisiae (strain ATCC 204508 / S288c) (Baker's yeast).